Here is a 439-residue protein sequence, read N- to C-terminus: MSRAMVAIVGRPNVGKSTLFNRILKRRISIVEDIPGVTRDRIYGNAEWLNRKFILVDTGGLDPDPKDVIFSKVKLQVEAAIEAADLILFVVDAREGLVPEDEEIANMLRKTKKEVILVCNKVDSFKEMPASFYDFFKLGLGEPIPISASNGLGIGELLDEVIKRLPENDVEYEEETIKIAVIGRPNVGKSSLVNRILGEERVIVSDIPGTTRDAIDTPFTKDGRNYILIDTAGIRRKSRISESIERYSVLRALAAIERADICLLMIDATEGPTEQDTKIAGYAFENGKGIIILVNKWDIVEKDSNTYKEYTEMIREKLAFISFAPILFISAKTGQRIHKVLETVDKVWEEYNKRITTGLLNNVLNEAMLMFPPPSSKGRPIKIYYATQVGTKPPTFVIFVNEPELLHFSYVRFLENTIRQNFGFEGVPIVISTKKRGED.

EngA-type G domains are found at residues 4–169 (AMVA…PEND) and 177–352 (IKIA…EEYN). GTP-binding positions include 10–17 (GRPNVGKS), 57–61 (DTGGL), 120–123 (NKVD), 183–190 (GRPNVGKS), 230–234 (DTAGI), and 295–298 (NKWD). The KH-like domain occupies 353-437 (KRITTGLLNN…PIVISTKKRG (85 aa)).

It belongs to the TRAFAC class TrmE-Era-EngA-EngB-Septin-like GTPase superfamily. EngA (Der) GTPase family. Associates with the 50S ribosomal subunit.

Functionally, GTPase that plays an essential role in the late steps of ribosome biogenesis. The sequence is that of GTPase Der from Caldanaerobacter subterraneus subsp. tengcongensis (strain DSM 15242 / JCM 11007 / NBRC 100824 / MB4) (Thermoanaerobacter tengcongensis).